The sequence spans 253 residues: MLAKRIIPCLDVTGGRVVKGVNFVELRDAGDPVEIAARYNEQGADELTFLDITATSDGRDLILPIIEAVASQVFIPLTVGGGVRSVEDVRRLLNAGADKVSFNSAAVANPQLIRDASDKYGAQCIVVAIDAKARVGGEGWEVYTHGGRRNTGLDAVAWAQQMAEFGAGEILLTSMDRDGTQIGFNLPLTRAVSDAVPVPVIASGGVGALEHLAEGIQVGGADAVLAASIFHYGTFTVGQAKALMAEHGIPVRM.

Residues Asp11 and Asp130 contribute to the active site.

This sequence belongs to the HisA/HisF family. As to quaternary structure, heterodimer of HisH and HisF.

The protein localises to the cytoplasm. It carries out the reaction 5-[(5-phospho-1-deoxy-D-ribulos-1-ylimino)methylamino]-1-(5-phospho-beta-D-ribosyl)imidazole-4-carboxamide + L-glutamine = D-erythro-1-(imidazol-4-yl)glycerol 3-phosphate + 5-amino-1-(5-phospho-beta-D-ribosyl)imidazole-4-carboxamide + L-glutamate + H(+). The protein operates within amino-acid biosynthesis; L-histidine biosynthesis; L-histidine from 5-phospho-alpha-D-ribose 1-diphosphate: step 5/9. Its function is as follows. IGPS catalyzes the conversion of PRFAR and glutamine to IGP, AICAR and glutamate. The HisF subunit catalyzes the cyclization activity that produces IGP and AICAR from PRFAR using the ammonia provided by the HisH subunit. This Methylibium petroleiphilum (strain ATCC BAA-1232 / LMG 22953 / PM1) protein is Imidazole glycerol phosphate synthase subunit HisF.